We begin with the raw amino-acid sequence, 132 residues long: Small ribosomal subunit protein uS8 (132 aa).

This sequence belongs to the universal ribosomal protein uS8 family. In terms of assembly, part of the 30S ribosomal subunit. Contacts proteins S5 and S12.

One of the primary rRNA binding proteins, it binds directly to 16S rRNA central domain where it helps coordinate assembly of the platform of the 30S subunit. The protein is Small ribosomal subunit protein uS8 of Exiguobacterium sp. (strain ATCC BAA-1283 / AT1b).